Reading from the N-terminus, the 297-residue chain is tRNA pseudouridine synthase B (297 aa).

Asp44 serves as the catalytic Nucleophile.

Belongs to the pseudouridine synthase TruB family. Type 1 subfamily.

It carries out the reaction uridine(55) in tRNA = pseudouridine(55) in tRNA. In terms of biological role, responsible for synthesis of pseudouridine from uracil-55 in the psi GC loop of transfer RNAs. This Corynebacterium glutamicum (strain R) protein is tRNA pseudouridine synthase B.